The chain runs to 614 residues: Vitamin B12 transporter BtuB (614 aa).

The first 20 residues, 1–20 (MIKKATLLTAFSVTAFSAWA), serve as a signal peptide directing secretion. The TonB box signature appears at 26 to 33 (DTLVVTAN). The region spanning 38–152 (PRSAVLAPVT…IGGVVNIITT (115 aa)) is the TBDR plug domain. Cyanocob(III)alamin is bound by residues Ser85, Asn92, and 110–111 (VS). A TBDR beta-barrel domain is found at 155 to 614 (NPGTELTAGW…EYTLSGSYTF (460 aa)). 3 consecutive transmembrane segments (beta stranded) span residues 158-165 (TELTAGWG), 169-178 (YQNYDISTQQ), and 184-195 (TRATLIGDYEYT). The Ca(2+) site is built by Asp199, Gln211, Asp213, and Asp215. Beta stranded transmembrane passes span 217 to 227 (FLSKTLYGALE) and 232 to 248 (DRWS…NRTD). 2 residues coordinate Ca(2+): Tyr249 and Asp250. Ala251 contacts cyanocob(III)alamin. Ca(2+) is bound at residue Asp261. Beta stranded transmembrane passes span 263–277 (RKLY…LRFN), 279–296 (ERIQ…KDYN), 309–325 (TLDE…NSVV), 328–337 (HGNVGAGVDW), 353–369 (YDQR…QQLG), 371–381 (FTLEAAARSDD), 385–400 (FGRH…WEFI), 403–417 (YRFI…KAPN), 434–443 (KSKQWEGAFE), 449–458 (VSWRISGYRN), 473–490 (YYNE…TANF), 494–509 (PLTH…ARNA), 517–529 (RRSK…QLDW), and 535–550 (DWGV…YDSD). Thr309 provides a ligand contact to cyanocob(III)alamin. Residue Arg517 coordinates cyanocob(III)alamin. Tyr551 is a binding site for cyanocob(III)alamin. Beta stranded transmembrane passes span 558 to 572 (TVKM…LTVA), 585 to 596 (IANLFDKDYETV), and 602 to 614 (AGRE…SYTF). Positions 597 to 614 (YGYQTAGREYTLSGSYTF) match the TonB C-terminal box motif.

The protein belongs to the TonB-dependent receptor family. BtuB (TC 1.B.14.3.1) subfamily.

It localises to the cell outer membrane. In terms of biological role, involved in the active translocation of vitamin B12 (cyanocobalamin) across the outer membrane to the periplasmic space. It derives its energy for transport by interacting with the trans-periplasmic membrane protein TonB. This Salmonella choleraesuis (strain SC-B67) protein is Vitamin B12 transporter BtuB.